The primary structure comprises 432 residues: Casein kinase II subunit alpha-4, chloroplastic (432 aa).

The N-terminal 55 residues, 1–55, are a transit peptide targeting the chloroplast; it reads MALRPCTGFTISSLRNASAANNNLFSLLSFSSSSPAKRNLLLSSLQDNLRRFASS. The segment at 63-83 is disordered; that stretch reads LRNQQQQHQQQQQSRVKEKSE. The span at 66–75 shows a compositional bias: low complexity; the sequence is QQQQHQQQQQ. Positions 132–417 constitute a Protein kinase domain; that stretch reads YEVVRKVGRG…AKEAMAHPYF (286 aa). Residues 138–146 and K161 each bind ATP; that span reads VGRGKYSEV. D249 acts as the Proton acceptor in catalysis.

The protein belongs to the protein kinase superfamily. Ser/Thr protein kinase family. CK2 subfamily. In terms of assembly, tetramer of two alpha and two beta chains. In terms of tissue distribution, expressed in root tips, lateral root primordia, cotyledons, leaf primordia, sepals, filaments, stigma, and anthers.

It is found in the plastid. The protein localises to the chloroplast. It catalyses the reaction L-seryl-[protein] + ATP = O-phospho-L-seryl-[protein] + ADP + H(+). The enzyme catalyses L-threonyl-[protein] + ATP = O-phospho-L-threonyl-[protein] + ADP + H(+). In terms of biological role, casein kinases are operationally defined by their preferential utilization of acidic proteins such as caseins as substrates. The alpha chain contains the catalytic site. Involved in the regulation of various developmental processes. Involved in the regulation of plant growth and flowering time. Involved in retrograde signaling in plant responses to abscisic acid (ABA) and heat stress. May act as an enhancing factor in abiotic stress signaling through modulation of the expression of some molecular players in retrograde signaling. Phosphorylates RuBisCo activase (RCA) at Thr-78. This chain is Casein kinase II subunit alpha-4, chloroplastic, found in Arabidopsis thaliana (Mouse-ear cress).